The chain runs to 251 residues: Flap endonuclease Xni (251 aa).

A Mg(2+)-binding site is contributed by Asp104. Positions 160–249 (VQPQQLPDYW…IDGNLQQLRL (90 aa)) constitute a 5'-3' exonuclease domain. K(+) contacts are provided by Leu171, Ala172, Pro180, Val182, and Ile185. The interaction with DNA stretch occupies residues 184–189 (GIGPKS).

The protein belongs to the Xni family. It depends on Mg(2+) as a cofactor. K(+) serves as cofactor.

Has flap endonuclease activity. During DNA replication, flap endonucleases cleave the 5'-overhanging flap structure that is generated by displacement synthesis when DNA polymerase encounters the 5'-end of a downstream Okazaki fragment. The polypeptide is Flap endonuclease Xni (Escherichia coli O45:K1 (strain S88 / ExPEC)).